Here is a 95-residue protein sequence, read N- to C-terminus: Bacterial microcompartment shell protein EutM (95 aa).

The BMC domain maps to 6 to 90 (ALGMIETKGL…PHFEVDAILP (85 aa)).

This sequence belongs to the bacterial microcompartments protein family. In terms of assembly, homohexamer; has a positively charged pore 9 Angstroms in diameter. The hexamers pack into a two-dimensional array. May interact with EutQ.

It localises to the bacterial microcompartment. The protein operates within amine and polyamine degradation; ethanolamine degradation. Its function is as follows. A component of the bacterial microcompartment (BMC) shell dedicated to ethanolamine degradation. Each homohexamer has a central pore with an opening of up to 9.0 Angstroms. Expression of the eut operon may allow this bacteria to use ethanolamine as a carbon, nitrogen and energy source. The pore probably allows metabolite passage into and out of the BMC. The protein is Bacterial microcompartment shell protein EutM of Clostridioides difficile (strain 630) (Peptoclostridium difficile).